The chain runs to 305 residues: Spermatogenesis-associated protein 4 (305 aa).

The Calponin-homology (CH) domain maps to 49–155; sequence SRLSRSVLRW…EEVYTLLTHR (107 aa).

Highly expressed in testis, the expression is observed precisely in seminiferous tubules.

The protein resides in the nucleus. Functionally, may play a role in apoptosis regulation. The sequence is that of Spermatogenesis-associated protein 4 (SPATA4) from Homo sapiens (Human).